A 215-amino-acid polypeptide reads, in one-letter code: Pyrrolidone-carboxylate peptidase (215 aa).

Active-site residues include E80, C143, and H167.

Belongs to the peptidase C15 family. In terms of assembly, homotetramer.

The protein resides in the cytoplasm. It carries out the reaction Release of an N-terminal pyroglutamyl group from a polypeptide, the second amino acid generally not being Pro.. Removes 5-oxoproline from various penultimate amino acid residues except L-proline. This Bacillus cereus (strain AH820) protein is Pyrrolidone-carboxylate peptidase.